The following is a 2448-amino-acid chain: Non-reducing polyketide synthase mapC (2448 aa).

Residues 14–226 (VLFGPQCPDI…HHEAHREGIQ (213 aa)) are N-terminal acylcarrier protein transacylase domain (SAT). Residues 330–350 (GFSNESPQPSTASLSNSVQTF) are disordered. The Ketosynthase family 3 (KS3) domain maps to 359-775 (ASPIAITGMA…GSNAALIVKE (417 aa)). Residues Cys524, His659, and His698 each act as for beta-ketoacyl synthase activity in the active site. The malonyl-CoA:ACP transacylase (MAT) domain stretch occupies residues 885 to 1188 (LCFGGQNGLT…HKIDLGGSSG (304 aa)). The For acyl/malonyl transferase activity role is filled by Ser972. The segment at 1256–1388 (GQEAGLLCQL…GTVCLHQERS (133 aa)) is N-terminal hotdog fold. The PKS/mFAS DH domain maps to 1256-1565 (GQEAGLLCQL…FTSVSIRSLT (310 aa)). A product template (PT) domain region spans residues 1261–1564 (LLCQLSESPD…RFTSVSIRSL (304 aa)). His1290 (proton acceptor; for dehydratase activity) is an active-site residue. Positions 1414–1565 (ASNGLKGSTV…FTSVSIRSLT (152 aa)) are C-terminal hotdog fold. Residue Asp1471 is the Proton donor; for dehydratase activity of the active site. One can recognise a Carrier domain in the interval 1610 to 1684 (AKDLATVQEM…GLVEHIFPGH (75 aa)). The residue at position 1644 (Ser1644) is an O-(pantetheine 4'-phosphoryl)serine. The tract at residues 1841–2076 (PYALEHDLLQ…GFEWVDWTNN (236 aa)) is methyltransferase (CMeT) domain. Active-site for thioesterase activity residues include Ser2227, Asp2385, and His2417.

It localises to the cytoplasm. Its subcellular location is the cytosol. The catalysed reaction is 3 malonyl-CoA + acetyl-CoA + S-adenosyl-L-methionine + H(+) = 5-methylorsellinate + S-adenosyl-L-homocysteine + 3 CO2 + 4 CoA. It participates in secondary metabolite biosynthesis; terpenoid biosynthesis. Functionally, non-reducing polyketide synthase; part of the gene cluster that mediates the biosynthesis of mycophenolic acid (MPA), the first isolated antibiotic natural product in the world obtained from a culture of Penicillium brevicompactum in 1893. MpaC catalyzes the synthesis of 5-methylorsellinic acid (5MOA) via the condensation of 1 acetyl-CoA starter unit with 3 malonyl-CoA units and one methylation step. The first step of the pathway is the synthesis of 5-methylorsellinic acid (5MOA) by the cytosolic polyketide synthase mpaC. 5MOA is then converted to the phthalide compound 5,7-dihydroxy-4,6-dimethylphthalide (DHMP) by the endoplasmic reticulum-bound cytochrome P450 monooxygenase mpaDE. MpaDE first catalyzes hydroxylation of 5-MOA to 4,6-dihydroxy-2-(hydroxymethyl)-3-methylbenzoic acid (DHMB). MpaDE then acts as a lactone synthase that catalyzes the ring closure to convert DHMB into DHMP. The next step is the prenylation of DHMP by the Golgi apparatus-associated prenyltransferase mpaA to yield farnesyl-DHMP (FDHMP). The ER-bound oxygenase mpaB then mediates the oxidative cleavage the C19-C20 double bond in FDHMP to yield FDHMP-3C via a mycophenolic aldehyde intermediate. The O-methyltransferase mpaG catalyzes the methylation of FDHMP-3C to yield MFDHMP-3C. After the cytosolic methylation of FDHMP-3C, MFDHMP-3C enters into peroxisomes probably via free diffusion due to its low molecular weight. Upon a peroxisomal CoA ligation reaction, catalyzed by a beta-oxidation component enzyme acyl-CoA ligase ACL891, MFDHMP-3C-CoA would then be restricted to peroxisomes for the following beta-oxidation pathway steps. The peroxisomal beta-oxidation machinery than converts MFDHMP-3C-CoA into MPA_CoA, via a beta-oxidation chain-shortening process. Finally mpaH acts as a peroxisomal acyl-CoA hydrolase with high substrate specificity toward MPA-CoA to release the final product MPA. The polypeptide is Non-reducing polyketide synthase mapC (Penicillium brevicompactum).